The sequence spans 51 residues: Large ribosomal subunit protein bL33 (51 aa).

The tract at residues 1–24 (MREKIRLNSSAGTGHFYTTDKNKR) is disordered.

The protein belongs to the bacterial ribosomal protein bL33 family.

The chain is Large ribosomal subunit protein bL33 from Cellvibrio japonicus (strain Ueda107) (Pseudomonas fluorescens subsp. cellulosa).